Reading from the N-terminus, the 274-residue chain is Orotidine 5'-phosphate decarboxylase (274 aa).

Substrate contacts are provided by residues Asp40, 62–64 (KTH), 93–102 (DRKFIDIGNT), Tyr227, and Arg245. The active-site Proton donor is Lys95.

The protein belongs to the OMP decarboxylase family.

It carries out the reaction orotidine 5'-phosphate + H(+) = UMP + CO2. The protein operates within pyrimidine metabolism; UMP biosynthesis via de novo pathway; UMP from orotate: step 2/2. This is Orotidine 5'-phosphate decarboxylase (pyrG) from Emericella nidulans (strain FGSC A4 / ATCC 38163 / CBS 112.46 / NRRL 194 / M139) (Aspergillus nidulans).